Reading from the N-terminus, the 346-residue chain is MTTVLAIETSCDETAVAIVNNRQVLSSIIASQISVHQQYGGVVPEVASRAHLETINGAIAQAMDQAQLGWDKIDAIAATCAPGLVGALLVGLTAAKTLAILHNKPFLGVHHLEGHIYATYLSEPTLDPPFLSLLVSGGHTSLIYVKECGRYESLGETRDDAAGEAFDKVARLLKLGYPGGPVIDKLAQTGNPQAFALPEGKVSLPGGGYHPYDGSFSGLKTAVLRLVQQLEKDGDSLPLEDIAASFQATVAKALTKRAIACALDYGLDTIAVGGGVAANSGLRQHLQAATAANNLRVLFPPLKFCTDNAAMIACAAVDHLSRGHTSPITLGVESRLSLSQVMKLYQ.

Positions 111 and 115 each coordinate Fe cation. Residues 134–138 (LVSGG), Asp-167, Gly-180, Asp-184, and Asn-279 each bind substrate. Position 307 (Asp-307) interacts with Fe cation.

This sequence belongs to the KAE1 / TsaD family. The cofactor is Fe(2+).

Its subcellular location is the cytoplasm. It carries out the reaction L-threonylcarbamoyladenylate + adenosine(37) in tRNA = N(6)-L-threonylcarbamoyladenosine(37) in tRNA + AMP + H(+). Functionally, required for the formation of a threonylcarbamoyl group on adenosine at position 37 (t(6)A37) in tRNAs that read codons beginning with adenine. Is involved in the transfer of the threonylcarbamoyl moiety of threonylcarbamoyl-AMP (TC-AMP) to the N6 group of A37, together with TsaE and TsaB. TsaD likely plays a direct catalytic role in this reaction. This chain is tRNA N6-adenosine threonylcarbamoyltransferase, found in Nostoc sp. (strain PCC 7120 / SAG 25.82 / UTEX 2576).